The following is a 281-amino-acid chain: Bifunctional protein FolD (281 aa).

NADP(+) contacts are provided by residues 165–167 (GRG), T192, and V233.

The protein belongs to the tetrahydrofolate dehydrogenase/cyclohydrolase family. As to quaternary structure, homodimer.

It catalyses the reaction (6R)-5,10-methylene-5,6,7,8-tetrahydrofolate + NADP(+) = (6R)-5,10-methenyltetrahydrofolate + NADPH. The enzyme catalyses (6R)-5,10-methenyltetrahydrofolate + H2O = (6R)-10-formyltetrahydrofolate + H(+). The protein operates within one-carbon metabolism; tetrahydrofolate interconversion. Functionally, catalyzes the oxidation of 5,10-methylenetetrahydrofolate to 5,10-methenyltetrahydrofolate and then the hydrolysis of 5,10-methenyltetrahydrofolate to 10-formyltetrahydrofolate. This chain is Bifunctional protein FolD, found in Mycobacteroides abscessus (strain ATCC 19977 / DSM 44196 / CCUG 20993 / CIP 104536 / JCM 13569 / NCTC 13031 / TMC 1543 / L948) (Mycobacterium abscessus).